The sequence spans 1216 residues: DNA polymerase subunit gamma-1 (1216 aa).

The span at 27–37 shows a compositional bias: low complexity; it reads SSSVLDPVPSD. The segment at 27–50 is disordered; sequence SSSVLDPVPSDGQPQSQMPSSENG. The segment covering 38–50 has biased composition (polar residues); sequence GQPQSQMPSSENG. Residues 179–183 carry the Exo I motif; the sequence is VFDVE. The active-site Exonuclease activity is the Asp181. The Exo II motif lies at 250 to 258; the sequence is VGHNVSFDR. A DNA-binding site is contributed by Ser289. Residues 301 to 314 show a composition bias toward basic residues; that stretch reads GKHKTQHPTKRGQK. The interval 301-321 is disordered; sequence GKHKTQHPTKRGQKSQKNANG. The Exo III signature appears at 377–385; sequence YCARDVWAT. Residues 488 to 518 are disordered; sequence TASASKLPIEGAGPFGDPMDQEDPGPPSEEE. An accessory-interacting determinant region spans residues 491–552; that stretch reads ASKLPIEGAG…RPQHLPGHPG (62 aa). Positions 506-518 are enriched in acidic residues; that stretch reads MDQEDPGPPSEEE. An RNA-binding site is contributed by Arg560. Residue Ser574 coordinates DNA. RNA is bound by residues His731, Gly740, and Lys745. Residues Lys783 and Thr826 each coordinate DNA. The interval 835–841 is trigger loop; sequence TWLTASN. Ser840 and Arg846 together coordinate RNA. The Pol A motif lies at 864–873; the sequence is VGADVDSQEL. Asp867, Val868, Ser870, Glu872, Arg920, Lys924, and Tyr928 together coordinate a 2'-deoxyribonucleoside 5'-triphosphate. Positions 867 and 868 each coordinate Mg(2+). The Pol B motif lies at 920-935; sequence REHAKVFNYGRIYGAG. DNA is bound by residues Thr1071 and Ser1072. The short motif at 1111–1118 is the Pol C element; that stretch reads HDEVRYLV. An a 2'-deoxyribonucleoside 5'-triphosphate-binding site is contributed by Asp1112. Mg(2+) is bound at residue Asp1112.

The protein belongs to the DNA polymerase type-A family. In terms of assembly, heterotrimer composed of a catalytic subunit and a homodimer of accessory subunits (POLG:POLG2). Interacts with TTC3. Interacts with LIG3. Requires Mg(2+) as cofactor.

The protein localises to the mitochondrion. Its subcellular location is the mitochondrion matrix. It localises to the mitochondrion nucleoid. The enzyme catalyses DNA(n) + a 2'-deoxyribonucleoside 5'-triphosphate = DNA(n+1) + diphosphate. It carries out the reaction a 3'-end 2'-deoxyribonucleotidyl-deoxyribonucleotide-DNA + H2O = a 3'-end 2'-deoxyribonucleotide-DNA + a 2'-deoxyribonucleoside 5'-phosphate + H(+). It catalyses the reaction a 5'-end 2'-deoxyribose-2'-deoxyribonucleotide-DNA = (2E,4S)-4-hydroxypenten-2-al-5-phosphate + a 5'-end 5'-phospho-2'-deoxyribonucleoside-DNA + H(+). Inhibited by dideoxynucleotides such as antiviral agent zalcitabine. In terms of biological role, catalytic subunit of DNA polymerase gamma solely responsible for replication of mitochondrial DNA (mtDNA). Replicates both heavy and light strands of the circular mtDNA genome using a single-stranded DNA template, RNA primers and the four deoxyribonucleoside triphosphates as substrates. Has 5' -&gt; 3' polymerase activity. Functionally interacts with TWNK and SSBP1 at the replication fork to form a highly processive replisome, where TWNK unwinds the double-stranded DNA template prior to replication and SSBP1 covers the parental heavy strand to enable continuous replication of the entire mitochondrial genome. A single nucleotide incorporation cycle includes binding of the incoming nucleotide at the insertion site, a phosphodiester bond formation reaction that extends the 3'-end of the primer DNA, and translocation of the primer terminus to the post-insertion site. After completing replication of a mtDNA strand, mediates 3' -&gt; 5' exonucleolytic degradation at the nick to enable proper ligation. Highly accurate due to high nucleotide selectivity and 3' -&gt; 5' exonucleolytic proofreading. Proficiently corrects base substitutions, single-base additions and deletions in non-repetitive sequences and short repeats, but displays lower proofreading activity when replicating longer homopolymeric stretches. Exerts exonuclease activity toward single-stranded DNA and double-stranded DNA containing 3'-terminal mispairs. When a misincorporation occurs, transitions from replication to a pro-nucleolytic editing mode and removes the missincorporated nucleoside in the exonuclease active site. Proceeds via an SN2 nucleolytic mechanism in which Asp-198 catalyzes phosphodiester bond hydrolysis and Glu-200 stabilizes the leaving group. As a result the primer strand becomes one nucleotide shorter and is positioned in the post-insertion site, ready to resume DNA synthesis. Exerts 5'-deoxyribose phosphate (dRP) lyase activity and mediates repair-associated mtDNA synthesis (gap filling) in base-excision repair pathway. Catalyzes the release of the 5'-terminal 2-deoxyribose-5-phosphate sugar moiety from incised apurinic/apyrimidinic (AP) sites to produce a substrate for DNA ligase. The dRP lyase reaction does not require divalent metal ions and likely proceeds via a Schiff base intermediate in a beta-elimination reaction mechanism. In Rattus norvegicus (Rat), this protein is DNA polymerase subunit gamma-1.